Reading from the N-terminus, the 116-residue chain is Non-specific lipid-transfer protein AP10 (116 aa).

Positions 1 to 26 are cleaved as a signal peptide; that stretch reads MKGTSMGVAILAMIVMAQLMVHPSVA. 4 disulfides stabilise this stretch: Cys29/Cys76, Cys39/Cys53, Cys54/Cys98, and Cys74/Cys112.

This sequence belongs to the plant LTP family. In germinating seeds, detected in the entire surface of the cotyledons, shoot meristem, inter-cotyledon space, primary xylem and immature vascular elements (at protein level). Expressed in seeds, but not the aerial parts of the plant.

It localises to the secreted. Its subcellular location is the extracellular space. It is found in the membrane. Its function is as follows. Plant non-specific lipid-transfer proteins transfer phospholipids as well as galactolipids across membranes. May play a role in wax or cutin deposition in the cell walls of expanding epidermal cells and certain secretory tissues. Permeabilizes the membrane of fungal spores, inhibits germination of the spores of the fungus F.solani at a concentration of 40 ug/ml. Inhibits the growth of F.solani with an IC(50) of 6.5 ug/ml, weakly inhibits the growth of the fungus A.alternata. Binds oleoyl-CoA. The protein is Non-specific lipid-transfer protein AP10 of Helianthus annuus (Common sunflower).